We begin with the raw amino-acid sequence, 363 residues long: Spermatogenesis-associated protein 22 (363 aa).

Composition is skewed to polar residues over residues 1-12, 30-48, 98-108, and 140-157; these read MKRSLNENSARS, QPLT…TPSD, IQSNTGRSQGG, and NDGK…QQKQ. Disordered stretches follow at residues 1 to 51, 98 to 127, and 140 to 170; these read MKRS…DNYD, IQSN…NKND, and NDGK…SRNK.

In terms of assembly, component of a multiprotein complex with MEIOB and RPA2. Interacts with MEIOB. Interacts with the complex BRME1:HSF2BP:BRCA2. Highly expressed in adult testis.

The protein localises to the chromosome. In terms of biological role, meiosis-specific protein required for homologous recombination in meiosis I. The polypeptide is Spermatogenesis-associated protein 22 (Homo sapiens (Human)).